The primary structure comprises 1019 residues: Enteropeptidase (1019 aa).

Gly2 carries the N-myristoyl glycine lipid modification. Over 2-18 (GSKRGISSRHHSLSSYE) the chain is Cytoplasmic. The chain crosses the membrane as a helical; Signal-anchor for type II membrane protein span at residues 19–47 (IMFAALFAILVVLCAGLIAVSCLTIKESQ). Topologically, residues 48-1019 (RGAALGQSHE…FTEWIQSFLH (972 aa)) are extracellular. Residues 54–169 (QSHEARATFK…NSVDILDKLT (116 aa)) enclose the SEA domain. Asn116, Asn147, and Asn179 each carry an N-linked (GlcNAc...) asparagine glycan. The 42-residue stretch at 182–223 (IECLPGSSPCTDALTCIKADLFCDGEVNCPDGSDEDNKMCAT) folds into the LDL-receptor class A 1 domain. Intrachain disulfides connect Cys184-Cys197, Cys191-Cys210, Cys204-Cys221, and Cys225-Cys253. A CUB 1 domain is found at 225–334 (CDGRFLLTGS…VGFNATYTAF (110 aa)). 8 N-linked (GlcNAc...) asparagine glycosylation sites follow: Asn328, Asn335, Asn388, Asn440, Asn470, Asn503, Asn534, and Asn630. One can recognise an MAM domain in the interval 342-504 (YEKINCNFED…ISLTYGICNG (163 aa)). A disulfide bridge connects residues Cys524 and Cys552. The 111-residue stretch at 524-634 (CGGPFELWEP…GGFKANFTTG (111 aa)) folds into the CUB 2 domain. Positions 641 to 679 (EPCKADHFQCKNGECVPLVNLCDGHLHCEDGSDEADCVR) constitute an LDL-receptor class A 2 domain. 3 disulfide bridges follow: Cys643/Cys655, Cys650/Cys668, and Cys662/Cys677. The SRCR domain maps to 678–771 (VRFFNGTTNN…LIRLQCNHKS (94 aa)). Residues Asn682, Asn706, and Asn725 are each glycosylated (N-linked (GlcNAc...) asparagine). 3 cysteine pairs are disulfide-bonded: Cys757-Cys767, Cys772-Cys896, and Cys810-Cys826. Residues 785 to 1019 (IVGGSNAKEG…FTEWIQSFLH (235 aa)) enclose the Peptidase S1 domain. Catalysis depends on His825, which acts as the Charge relay system. Asn848 carries N-linked (GlcNAc...) asparagine glycosylation. Catalysis depends on Asp876, which acts as the Charge relay system. 3 N-linked (GlcNAc...) asparagine glycosylation sites follow: Asn887, Asn909, and Asn949. Intrachain disulfides connect Cys910/Cys977, Cys941/Cys956, and Cys967/Cys995. Ser971 (charge relay system) is an active-site residue.

This sequence belongs to the peptidase S1 family. Heterodimer of a catalytic (light) chain and a multidomain (heavy) chain linked by a disulfide bond. Post-translationally, the chains are derived from a single precursor that is cleaved by a trypsin-like protease. As to expression, intestinal brush border.

It is found in the membrane. The enzyme catalyses Activation of trypsinogen by selective cleavage of 6-Lys-|-Ile-7 bond.. Responsible for initiating activation of pancreatic proteolytic proenzymes (trypsin, chymotrypsin and carboxypeptidase A). It catalyzes the conversion of trypsinogen to trypsin which in turn activates other proenzymes including chymotrypsinogen, procarboxypeptidases, and proelastases. The sequence is that of Enteropeptidase (TMPRSS15) from Homo sapiens (Human).